A 112-amino-acid polypeptide reads, in one-letter code: Photosystem II reaction center Psb28 protein (112 aa).

Belongs to the Psb28 family. Part of the photosystem II complex.

It localises to the cellular thylakoid membrane. This is Photosystem II reaction center Psb28 protein from Synechococcus elongatus (strain ATCC 33912 / PCC 7942 / FACHB-805) (Anacystis nidulans R2).